Reading from the N-terminus, the 467-residue chain is tRNA modification GTPase MnmE (467 aa).

Residues R30, E92, and R131 each contribute to the (6S)-5-formyl-5,6,7,8-tetrahydrofolate site. Residues 226–388 (GLKVAIIGRP…LEAAILNAVN (163 aa)) enclose the TrmE-type G domain. Position 236 (N236) interacts with K(+). GTP contacts are provided by residues 236–241 (NVGKSS), 255–261 (TDLPGTT), and 280–283 (DTAG). S240 contacts Mg(2+). Residues T255, L257, and T260 each coordinate K(+). T261 provides a ligand contact to Mg(2+). Residue K467 coordinates (6S)-5-formyl-5,6,7,8-tetrahydrofolate.

Belongs to the TRAFAC class TrmE-Era-EngA-EngB-Septin-like GTPase superfamily. TrmE GTPase family. Homodimer. Heterotetramer of two MnmE and two MnmG subunits. The cofactor is K(+).

The protein resides in the cytoplasm. Functionally, exhibits a very high intrinsic GTPase hydrolysis rate. Involved in the addition of a carboxymethylaminomethyl (cmnm) group at the wobble position (U34) of certain tRNAs, forming tRNA-cmnm(5)s(2)U34. The sequence is that of tRNA modification GTPase MnmE from Trichodesmium erythraeum (strain IMS101).